The following is a 270-amino-acid chain: MVLLKEYRVILPVSVDEYQVGQLYSVAEASKNETGGGEGVEVLVNEPYEKDGEKGQYTHKIYHLQSKVPTFVRMLAPEGALNIHEKAWNAYPYCRTVITNEYMKEDFLIKIETWHKPDLGTQENVHKLEPEAWKHVEAVYIDIADRSQVLSKDYKAEEDPAKFKSIKTGRGPLGPNWKQELVNQKDCPYMCAYKLVTVKFKWWGLQNKVENFIHKQERRLFTNFHRQLFCWLDKWVDLTMDDIRRMEEETKRQLDEMRQKDPVKGMTADD.

Thr-58, Lys-60, Glu-85, Asn-89, Thr-96, and Lys-194 together coordinate a 1,2-diacyl-sn-glycero-3-phospho-(1D-myo-inositol). Lys-215 is modified (N6-acetyllysine). Residues 250 to 263 show a composition bias toward basic and acidic residues; it reads TKRQLDEMRQKDPV. The segment at 250 to 270 is disordered; it reads TKRQLDEMRQKDPVKGMTADD.

Belongs to the PtdIns transfer protein family. PI transfer class I subfamily.

The protein resides in the cytoplasm. It is found in the nucleus. It catalyses the reaction a 1,2-diacyl-sn-glycero-3-phosphocholine(in) = a 1,2-diacyl-sn-glycero-3-phosphocholine(out). The enzyme catalyses a 1,2-diacyl-sn-glycero-3-phospho-(1D-myo-inositol)(in) = a 1,2-diacyl-sn-glycero-3-phospho-(1D-myo-inositol)(out). Phosphatidylinositol transfer activity is inhibited by N-ethylmaleimide. Catalyzes the transfer of phosphatidylinositol (PI) and phosphatidylcholine (PC) between membranes. Shows a preference for PI and PC containing shorter saturated or monosaturated acyl chains at the sn-1 and sn-2 positions. Preference order for PC is C16:1 &gt; C16:0 &gt; C18:1 &gt; C18:0 &gt; C20:4 and for PI is C16:1 &gt; C16:0 &gt; C18:1 &gt; C18:0 &gt; C20:4 &gt; C20:3. The protein is Phosphatidylinositol transfer protein alpha isoform (PITPNA) of Homo sapiens (Human).